Here is a 428-residue protein sequence, read N- to C-terminus: Adenylosuccinate synthetase (428 aa).

GTP-binding positions include G12 to K18 and G40 to T42. D13 serves as the catalytic Proton acceptor. D13 and G40 together coordinate Mg(2+). IMP contacts are provided by residues D13–K16, N38–H41, T129, R143, Q224, T239, and R303. H41 (proton donor) is an active-site residue. V299 to R305 contributes to the substrate binding site. GTP contacts are provided by residues R305, K331 to D333, and A410 to G412.

This sequence belongs to the adenylosuccinate synthetase family. As to quaternary structure, homodimer. Mg(2+) is required as a cofactor.

Its subcellular location is the cytoplasm. It carries out the reaction IMP + L-aspartate + GTP = N(6)-(1,2-dicarboxyethyl)-AMP + GDP + phosphate + 2 H(+). Its pathway is purine metabolism; AMP biosynthesis via de novo pathway; AMP from IMP: step 1/2. Its function is as follows. Plays an important role in the de novo pathway of purine nucleotide biosynthesis. Catalyzes the first committed step in the biosynthesis of AMP from IMP. The polypeptide is Adenylosuccinate synthetase (Francisella tularensis subsp. holarctica (strain FTNF002-00 / FTA)).